The sequence spans 255 residues: ATP synthase subunit b 1 (255 aa).

Residues 5 to 22 (WITVAAQIVNFLLLIWLL) form a helical membrane-spanning segment.

Belongs to the ATPase B chain family. F-type ATPases have 2 components, F(1) - the catalytic core - and F(0) - the membrane proton channel. F(1) has five subunits: alpha(3), beta(3), gamma(1), delta(1), epsilon(1). F(0) has three main subunits: a(1), b(2) and c(10-14). The alpha and beta chains form an alternating ring which encloses part of the gamma chain. F(1) is attached to F(0) by a central stalk formed by the gamma and epsilon chains, while a peripheral stalk is formed by the delta and b chains.

It is found in the cell inner membrane. F(1)F(0) ATP synthase produces ATP from ADP in the presence of a proton or sodium gradient. F-type ATPases consist of two structural domains, F(1) containing the extramembraneous catalytic core and F(0) containing the membrane proton channel, linked together by a central stalk and a peripheral stalk. During catalysis, ATP synthesis in the catalytic domain of F(1) is coupled via a rotary mechanism of the central stalk subunits to proton translocation. Functionally, component of the F(0) channel, it forms part of the peripheral stalk, linking F(1) to F(0). The protein is ATP synthase subunit b 1 of Dinoroseobacter shibae (strain DSM 16493 / NCIMB 14021 / DFL 12).